The sequence spans 124 residues: S-adenosylmethionine decarboxylase proenzyme (124 aa).

The Schiff-base intermediate with substrate; via pyruvic acid role is filled by S63. S63 is subject to Pyruvic acid (Ser); by autocatalysis. The active-site Proton acceptor; for processing activity is H68. The active-site Proton donor; for catalytic activity is C83.

Belongs to the prokaryotic AdoMetDC family. Type 1 subfamily. In terms of assembly, heterotetramer of two alpha and two beta chains arranged as a dimer of alpha/beta heterodimers. The cofactor is pyruvate. Post-translationally, is synthesized initially as an inactive proenzyme. Formation of the active enzyme involves a self-maturation process in which the active site pyruvoyl group is generated from an internal serine residue via an autocatalytic post-translational modification. Two non-identical subunits are generated from the proenzyme in this reaction, and the pyruvate is formed at the N-terminus of the alpha chain, which is derived from the carboxyl end of the proenzyme. The post-translation cleavage follows an unusual pathway, termed non-hydrolytic serinolysis, in which the side chain hydroxyl group of the serine supplies its oxygen atom to form the C-terminus of the beta chain, while the remainder of the serine residue undergoes an oxidative deamination to produce ammonia and the pyruvoyl group blocking the N-terminus of the alpha chain.

The catalysed reaction is S-adenosyl-L-methionine + H(+) = S-adenosyl 3-(methylsulfanyl)propylamine + CO2. It participates in amine and polyamine biosynthesis; S-adenosylmethioninamine biosynthesis; S-adenosylmethioninamine from S-adenosyl-L-methionine: step 1/1. In terms of biological role, catalyzes the decarboxylation of S-adenosylmethionine to S-adenosylmethioninamine (dcAdoMet), the propylamine donor required for the synthesis of the polyamines spermine and spermidine from the diamine putrescine. This chain is S-adenosylmethionine decarboxylase proenzyme, found in Thermoanaerobacter pseudethanolicus (strain ATCC 33223 / 39E) (Clostridium thermohydrosulfuricum).